The following is a 92-amino-acid chain: Large ribosomal subunit protein bL27 (92 aa).

Residues 1 to 21 are disordered; the sequence is MSKKKGVGSSRNGRDSESKRL. The segment covering 12 to 21 has biased composition (basic and acidic residues); that stretch reads NGRDSESKRL.

This sequence belongs to the bacterial ribosomal protein bL27 family.

The chain is Large ribosomal subunit protein bL27 from Halothermothrix orenii (strain H 168 / OCM 544 / DSM 9562).